Here is a 78-residue protein sequence, read N- to C-terminus: Acyl carrier protein (78 aa).

The region spanning S2 to S77 is the Carrier domain. Position 37 is an O-(pantetheine 4'-phosphoryl)serine (S37).

It belongs to the acyl carrier protein (ACP) family. 4'-phosphopantetheine is transferred from CoA to a specific serine of apo-ACP by AcpS. This modification is essential for activity because fatty acids are bound in thioester linkage to the sulfhydryl of the prosthetic group.

The protein resides in the cytoplasm. It participates in lipid metabolism; fatty acid biosynthesis. Functionally, carrier of the growing fatty acid chain in fatty acid biosynthesis. In Methylobacterium sp. (strain 4-46), this protein is Acyl carrier protein.